The sequence spans 342 residues: Ubiquitin fusion degradation protein 1 homolog (342 aa).

Disordered regions lie at residues 245 to 276 (FGGA…SNAA) and 318 to 342 (EKEA…RGAR). Over residues 259 to 275 (SSSVSLSDGTGVSTSNA) the composition is skewed to polar residues.

The protein belongs to the UFD1 family. As to quaternary structure, forms a complex composed of ubxn-3, ufd-1, npl-4.1 and cdc-48.1; within the complex interacts with cdc-48.1. Interacts with cdc-48.2. Interacts with npl-4.1 and/or npl-4.2.

It is found in the cytoplasm. It localises to the nucleus. Functions at a post-ubiquitination step in the ubiquitin fusion degradation (UFD) pathway. In association with npl-4.1 and/or npl-4.2 and ATPase cdc-48.1 and/or cdc-48.2, involved in the cytoplasmic elimination of misfolded proteins exported from the ER. This pathway, known as ERAD, prevents the activation of the unfolded protein response (UPR) caused by the accumulation of misfolded proteins in the ER. During S phase and in association with npl-4.1 and/or npl-4.2, cdc-48.1 and/or cdc-48.2 and ubxn-3, ensures the degradation of DNA licensing factor cdt-1 after the initiation of DNA replication and thus the disassembly of the DNA replication CMG helicase complex by promoting the dissociation from chromatin of several of its components including cdc-45 and sld-5. Regulates ubxn-3 nuclear localization during S phase. This chain is Ubiquitin fusion degradation protein 1 homolog (ufd-1), found in Caenorhabditis elegans.